We begin with the raw amino-acid sequence, 575 residues long: MDTTGRLHHRKHATPVEDRSPTTPKASDALPLPLYLTNAVFFTLFFSVAYYLLHRWRDKIRNSTPLHIVTLSEIVAIVSLIASFIYLLGFFGIDFVQSFIARASHDVWDLEDTDPNYLIDEDHRLVTCPPANISTKTTIIAAPTKLPTSEPLIAPLVSEEDEMIVNSVVDGKIPSYSLESKLGDCKRAAAIRREALQRMTRRSLEGLPVEGFDYESILGQCCEMPVGYVQIPVGIAGPLLLNGREYSVPMATTEGCLVASTNRGCKAIYLSGGATSVLLKDGMTRAPVVRFASATRAAELKFFLEDPDNFDTLAVVFNKSSRFARLQGIKCSIAGKNLYIRFSCSTGDAMGMNMVSKGVQNVLEFLQSDFSDMDVIGISGNFCSDKKPAAVNWIEGRGKSVVCEAIIKEEVVKKVLKTNVASLVELNMLKNLAGSAVAGALGGFNAHAGNIVSAIFIATGQDPAQNVESSHCITMMEAVNDGKDLHISVTMPSIEVGTVGGGTQLASQSACLNLLGVKGANKESPGSNSRLLAAIVAGSVLAGELSLMSAIAAGQLVKSHMKYNRSSKDMSKAAS.

The span at 1–13 shows a compositional bias: basic residues; the sequence is MDTTGRLHHRKHA. The interval 1–25 is disordered; sequence MDTTGRLHHRKHATPVEDRSPTTPK. 2 consecutive transmembrane segments (helical) span residues 29–49 and 73–93; these read ALPL…FSVA and EIVA…FFGI. A linker region spans residues 97–160; sequence QSFIARASHD…PLIAPLVSEE (64 aa). Residue asparagine 132 is glycosylated (N-linked (GlcNAc...) asparagine). Positions 161–575 are catalytic; the sequence is DEMIVNSVVD…SSKDMSKAAS (415 aa). Glutamate 254 acts as the Charge relay system in catalysis. A glycan (N-linked (GlcNAc...) asparagine) is linked at asparagine 318. Residues lysine 386 and aspartate 462 each act as charge relay system in the active site. Residues 531–551 form a helical membrane-spanning segment; sequence LLAAIVAGSVLAGELSLMSAI. The active-site Proton donor is the histidine 560. An N-linked (GlcNAc...) asparagine glycan is attached at asparagine 564.

This sequence belongs to the HMG-CoA reductase family.

It is found in the endoplasmic reticulum membrane. The protein resides in the mitochondrion membrane. Its subcellular location is the plastid membrane. It catalyses the reaction (R)-mevalonate + 2 NADP(+) + CoA = (3S)-3-hydroxy-3-methylglutaryl-CoA + 2 NADPH + 2 H(+). It functions in the pathway metabolic intermediate biosynthesis; (R)-mevalonate biosynthesis; (R)-mevalonate from acetyl-CoA: step 3/3. Its function is as follows. Catalyzes the synthesis of mevalonate. The specific precursor of all isoprenoid compounds present in plants. The sequence is that of 3-hydroxy-3-methylglutaryl-coenzyme A reductase 1 (HMGR1) from Hevea brasiliensis (Para rubber tree).